The primary structure comprises 154 residues: RING finger protein 11 (154 aa).

Polar residues predominate over residues 1-12; the sequence is MGNCLKSPTSDD. Positions 1–53 are disordered; it reads MGNCLKSPTSDDISLLHESQSDRASFGEGTEPDQEPPPPYQEQVPVPVYHPTP. Glycine 2 carries N-myristoyl glycine lipidation. A lipid anchor (S-palmitoyl cysteine) is attached at cysteine 4. 2 positions are modified to phosphoserine: serine 14 and serine 25. A PPxY motif motif is present at residues 37–40; that stretch reads PPPY. Low complexity predominate over residues 41–51; the sequence is QEQVPVPVYHP. The RING-type zinc-finger motif lies at 99–140; sequence CVICMMDFVYGDPIRFLPCMHIYHLDCIDDWLMRSFTCPSCM. A Phosphothreonine; by PKB/AKT1 modification is found at threonine 135.

In terms of assembly, interacts (when phosphorylated) with 14-3-3. Interacts with the E3 ubiquitin-ligases NEDD4, ITCH, SMURF2 and WWP1. Also interacts with the E2 ubiquitin-conjugating enzymes UBE2D1 and UBE2N, but neither with CDC34, nor with UBE2L3. Interacts with ZNF350, EPS15 and STAMBP. After TNF stimulation, interacts with TAX1BP1, TNFAIP3 and RIPK1; these interactions are transient and they are lost after 1 hour of stimulation with TNF. Interacts with GGA1. Ubiquitinated in the presence of ITCH, SMURF2 and UBE2D1, as well as WWP1. In terms of processing, phosphorylation by PKB/AKT1 may accelerate degradation by the proteasome. Post-translationally, acylation at both Gly-2 and Cys-4 is required for proper localization to the endosomes.

The protein resides in the early endosome. The protein localises to the recycling endosome. Its subcellular location is the cytoplasm. It localises to the nucleus. Functionally, essential component of a ubiquitin-editing protein complex, comprising also TNFAIP3, ITCH and TAX1BP1, that ensures the transient nature of inflammatory signaling pathways. Promotes the association of TNFAIP3 to RIPK1 after TNF stimulation. TNFAIP3 deubiquitinates 'Lys-63' polyubiquitin chains on RIPK1 and catalyzes the formation of 'Lys-48'-polyubiquitin chains. This leads to RIPK1 proteasomal degradation and consequently termination of the TNF- or LPS-mediated activation of NF-kappa-B. Recruits STAMBP to the E3 ubiquitin-ligase SMURF2 for ubiquitination, leading to its degradation by the 26S proteasome. The sequence is that of RING finger protein 11 (RNF11) from Bos taurus (Bovine).